Reading from the N-terminus, the 941-residue chain is ATP-dependent 6-phosphofructokinase subunit beta (941 aa).

The interval proline 2–serine 558 is N-terminal catalytic PFK domain 1. ATP is bound by residues glycine 191, arginine 255 to cysteine 256, and glycine 285 to serine 288. Residue aspartate 286 participates in Mg(2+) binding. Residues serine 331–aspartate 333, arginine 368, and methionine 375–arginine 377 contribute to the beta-D-fructose 6-phosphate site. The active-site Proton acceptor is the aspartate 333. Residues isoleucine 395, lysine 400–arginine 405, and glutamine 410 contribute to the ATP site. Beta-D-fructose 6-phosphate contacts are provided by residues glutamate 432, arginine 460, and histidine 466–arginine 469. ATP is bound at residue asparagine 557–serine 558. An interdomain linker region spans residues alanine 559–lysine 572. The C-terminal regulatory PFK domain 2 stretch occupies residues lysine 573–leucine 941. Residues arginine 643, threonine 701 to asparagine 705, arginine 739, glutamine 746 to glycine 748, glutamate 806, lysine 832, histidine 838 to glutamine 841, and arginine 918 each bind beta-D-fructose 2,6-bisphosphate.

The protein belongs to the phosphofructokinase type A (PFKA) family. ATP-dependent PFK group I subfamily. Eukaryotic two domain clade 'E' sub-subfamily. Heterododecamer of 4 alpha, 4 beta and 4 gamma chains. The cofactor is Mg(2+).

The protein localises to the cytoplasm. It carries out the reaction beta-D-fructose 6-phosphate + ATP = beta-D-fructose 1,6-bisphosphate + ADP + H(+). Its pathway is carbohydrate degradation; glycolysis; D-glyceraldehyde 3-phosphate and glycerone phosphate from D-glucose: step 3/4. With respect to regulation, allosterically activated by ADP, AMP, or fructose 2,6-bisphosphate, and allosterically inhibited by ATP or citrate. In terms of biological role, catalyzes the phosphorylation of D-fructose 6-phosphate to fructose 1,6-bisphosphate by ATP, the first committing step of glycolysis. This Komagataella pastoris (Yeast) protein is ATP-dependent 6-phosphofructokinase subunit beta (PFK2).